A 189-amino-acid chain; its full sequence is GTP cyclohydrolase 1 (189 aa).

3 residues coordinate Zn(2+): C76, H79, and C149.

It belongs to the GTP cyclohydrolase I family. Homomer.

It carries out the reaction GTP + H2O = 7,8-dihydroneopterin 3'-triphosphate + formate + H(+). It functions in the pathway cofactor biosynthesis; 7,8-dihydroneopterin triphosphate biosynthesis; 7,8-dihydroneopterin triphosphate from GTP: step 1/1. This is GTP cyclohydrolase 1 from Dehalococcoides mccartyi (strain ATCC BAA-2100 / JCM 16839 / KCTC 5957 / BAV1).